The chain runs to 242 residues: tRNA (guanine-N(1)-)-methyltransferase (242 aa).

S-adenosyl-L-methionine is bound by residues G111 and 130–135 (IGDYVL).

This sequence belongs to the RNA methyltransferase TrmD family. As to quaternary structure, homodimer.

Its subcellular location is the cytoplasm. The catalysed reaction is guanosine(37) in tRNA + S-adenosyl-L-methionine = N(1)-methylguanosine(37) in tRNA + S-adenosyl-L-homocysteine + H(+). In terms of biological role, specifically methylates guanosine-37 in various tRNAs. The chain is tRNA (guanine-N(1)-)-methyltransferase from Onion yellows phytoplasma (strain OY-M).